Reading from the N-terminus, the 536-residue chain is Phosphoenolpyruvate carboxykinase (ATP) (536 aa).

The substrate site is built by R61, Y195, and K201. ATP is bound by residues K201, H220, and G236–T244. 2 residues coordinate Mn(2+): K201 and H220. D257 serves as a coordination point for Mn(2+). E285, R322, and T447 together coordinate ATP. R322 contacts substrate.

The protein belongs to the phosphoenolpyruvate carboxykinase (ATP) family. Mn(2+) is required as a cofactor.

Its subcellular location is the cytoplasm. The enzyme catalyses oxaloacetate + ATP = phosphoenolpyruvate + ADP + CO2. It functions in the pathway carbohydrate biosynthesis; gluconeogenesis. Involved in the gluconeogenesis. Catalyzes the conversion of oxaloacetate (OAA) to phosphoenolpyruvate (PEP) through direct phosphoryl transfer between the nucleoside triphosphate and OAA. The polypeptide is Phosphoenolpyruvate carboxykinase (ATP) (Allorhizobium ampelinum (strain ATCC BAA-846 / DSM 112012 / S4) (Agrobacterium vitis (strain S4))).